The following is a 452-amino-acid chain: UDP-N-acetylmuramoylalanine--D-glutamate ligase (452 aa).

119–125 (GSNGKTT) contacts ATP.

The protein belongs to the MurCDEF family.

The protein localises to the cytoplasm. The catalysed reaction is UDP-N-acetyl-alpha-D-muramoyl-L-alanine + D-glutamate + ATP = UDP-N-acetyl-alpha-D-muramoyl-L-alanyl-D-glutamate + ADP + phosphate + H(+). Its pathway is cell wall biogenesis; peptidoglycan biosynthesis. In terms of biological role, cell wall formation. Catalyzes the addition of glutamate to the nucleotide precursor UDP-N-acetylmuramoyl-L-alanine (UMA). This chain is UDP-N-acetylmuramoylalanine--D-glutamate ligase (murD), found in Streptococcus pyogenes serotype M1.